Reading from the N-terminus, the 702-residue chain is DNA ligase (702 aa).

NAD(+)-binding positions include 32–36 (DAEYD) and 81–82 (SL). Residues 104 to 125 (AESSAQKASLNPLVRDSDQKNR) form a disordered region. E139 is a binding site for NAD(+). K141 functions as the N6-AMP-lysine intermediate in the catalytic mechanism. Residues R162, E199, K316, and K340 each coordinate NAD(+). Zn(2+) is bound by residues C434, C437, C452, and C458. A BRCT domain is found at 616–702 (KPNHPFRDKT…KALKPEGTKV (87 aa)).

This sequence belongs to the NAD-dependent DNA ligase family. LigA subfamily. It depends on Mg(2+) as a cofactor. Mn(2+) is required as a cofactor.

The catalysed reaction is NAD(+) + (deoxyribonucleotide)n-3'-hydroxyl + 5'-phospho-(deoxyribonucleotide)m = (deoxyribonucleotide)n+m + AMP + beta-nicotinamide D-nucleotide.. Functionally, DNA ligase that catalyzes the formation of phosphodiester linkages between 5'-phosphoryl and 3'-hydroxyl groups in double-stranded DNA using NAD as a coenzyme and as the energy source for the reaction. It is essential for DNA replication and repair of damaged DNA. The polypeptide is DNA ligase (Hamiltonella defensa subsp. Acyrthosiphon pisum (strain 5AT)).